The chain runs to 285 residues: Eukaryotic translation initiation factor 3 subunit F-2 (285 aa).

The MPN domain occupies 11-145 (VFLKPLVLFQ…TRLYCAVEMG (135 aa)).

This sequence belongs to the eIF-3 subunit F family. In terms of assembly, component of the eukaryotic translation initiation factor 3 (eIF-3) complex. The eIF-3 complex interacts with pix.

It is found in the cytoplasm. In terms of biological role, component of the eukaryotic translation initiation factor 3 (eIF-3) complex, which is involved in protein synthesis of a specialized repertoire of mRNAs and, together with other initiation factors, stimulates binding of mRNA and methionyl-tRNAi to the 40S ribosome. The eIF-3 complex specifically targets and initiates translation of a subset of mRNAs involved in cell proliferation. The chain is Eukaryotic translation initiation factor 3 subunit F-2 from Drosophila simulans (Fruit fly).